We begin with the raw amino-acid sequence, 157 residues long: SsrA-binding protein (157 aa).

The tract at residues 133–157 is disordered; it reads LHDKRETEKKRDWSREKGRLLRARG. Over residues 135 to 151 the composition is skewed to basic and acidic residues; sequence DKRETEKKRDWSREKGR.

This sequence belongs to the SmpB family.

Its subcellular location is the cytoplasm. Functionally, required for rescue of stalled ribosomes mediated by trans-translation. Binds to transfer-messenger RNA (tmRNA), required for stable association of tmRNA with ribosomes. tmRNA and SmpB together mimic tRNA shape, replacing the anticodon stem-loop with SmpB. tmRNA is encoded by the ssrA gene; the 2 termini fold to resemble tRNA(Ala) and it encodes a 'tag peptide', a short internal open reading frame. During trans-translation Ala-aminoacylated tmRNA acts like a tRNA, entering the A-site of stalled ribosomes, displacing the stalled mRNA. The ribosome then switches to translate the ORF on the tmRNA; the nascent peptide is terminated with the 'tag peptide' encoded by the tmRNA and targeted for degradation. The ribosome is freed to recommence translation, which seems to be the essential function of trans-translation. This chain is SsrA-binding protein, found in Bradyrhizobium diazoefficiens (strain JCM 10833 / BCRC 13528 / IAM 13628 / NBRC 14792 / USDA 110).